The chain runs to 570 residues: Adenine deaminase (570 aa).

The protein belongs to the metallo-dependent hydrolases superfamily. Adenine deaminase family. The cofactor is Mn(2+).

It catalyses the reaction adenine + H2O + H(+) = hypoxanthine + NH4(+). This Oleidesulfovibrio alaskensis (strain ATCC BAA-1058 / DSM 17464 / G20) (Desulfovibrio alaskensis) protein is Adenine deaminase.